We begin with the raw amino-acid sequence, 427 residues long: Serine hydroxymethyltransferase (427 aa).

Residues Leu-122 and 126–128 (GHL) each bind (6S)-5,6,7,8-tetrahydrofolate. N6-(pyridoxal phosphate)lysine is present on Lys-231. Position 355 to 357 (355 to 357 (SPF)) interacts with (6S)-5,6,7,8-tetrahydrofolate.

It belongs to the SHMT family. In terms of assembly, homodimer. It depends on pyridoxal 5'-phosphate as a cofactor.

Its subcellular location is the cytoplasm. The catalysed reaction is (6R)-5,10-methylene-5,6,7,8-tetrahydrofolate + glycine + H2O = (6S)-5,6,7,8-tetrahydrofolate + L-serine. It functions in the pathway one-carbon metabolism; tetrahydrofolate interconversion. The protein operates within amino-acid biosynthesis; glycine biosynthesis; glycine from L-serine: step 1/1. Its function is as follows. Catalyzes the reversible interconversion of serine and glycine with tetrahydrofolate (THF) serving as the one-carbon carrier. This reaction serves as the major source of one-carbon groups required for the biosynthesis of purines, thymidylate, methionine, and other important biomolecules. Also exhibits THF-independent aldolase activity toward beta-hydroxyamino acids, producing glycine and aldehydes, via a retro-aldol mechanism. This Synechococcus sp. (strain ATCC 27144 / PCC 6301 / SAUG 1402/1) (Anacystis nidulans) protein is Serine hydroxymethyltransferase.